The sequence spans 704 residues: Polyribonucleotide nucleotidyltransferase (704 aa).

Mg(2+) is bound by residues Asp-490 and Asp-496. The 60-residue stretch at 557–616 (PKIEMIQIKPAKIKDVIGKGGETINSIIDETGVKIDIDQDGNVSIASSDAEMIKKAIKII) folds into the KH domain. The S1 motif domain occupies 626-694 (GQVYLAKVVR…KQGRVNVSRK (69 aa)).

This sequence belongs to the polyribonucleotide nucleotidyltransferase family. Mg(2+) serves as cofactor.

Its subcellular location is the cytoplasm. It catalyses the reaction RNA(n+1) + phosphate = RNA(n) + a ribonucleoside 5'-diphosphate. In terms of biological role, involved in mRNA degradation. Catalyzes the phosphorolysis of single-stranded polyribonucleotides processively in the 3'- to 5'-direction. The polypeptide is Polyribonucleotide nucleotidyltransferase (Enterococcus faecalis (strain ATCC 700802 / V583)).